The following is a 253-amino-acid chain: Light-harvesting complex stress-related protein 1, chloroplastic (253 aa).

A chloroplast-targeting transit peptide spans 1–39; the sequence is MAMMMRKAAAVPASSRRSVAVNSVSGKRTVSGKAGAPVP. Residue tyrosine 45 participates in chlorophyll b binding. 3 residues coordinate chlorophyll a: phenylalanine 60, glutamate 81, and histidine 84. Arginine 86 is a chlorophyll b binding site. The helical transmembrane segment at 87 to 107 threads the bilayer; it reads VAMLAALGFIVGEQLQDFPLF. Glutamine 124 serves as a coordination point for chlorophyll a. The helical transmembrane segment at 131 to 151 threads the bilayer; that stretch reads EPLLIAIGVAESYRVAVGWAT. Residues glutamate 141 and arginine 144 each contribute to the chlorophyll b site. Chlorophyll a contacts are provided by lysine 190, glutamate 191, asparagine 194, arginine 196, and glutamine 208. A helical membrane pass occupies residues 197–217; the sequence is LAMIAIAAFVAQELVEQTEIF.

Belongs to the light-harvesting chlorophyll a/b-binding (LHC) protein family.

It is found in the plastid. The protein localises to the chloroplast thylakoid membrane. Its function is as follows. Required for non-photochemical quenching (NPQ), a mechanism that converts and dissipates the harmful excess absorbed light energy into heat and protect the photosynthetic apparatus from photo-oxidative damage. Is able to sense luminal acidification of the thylakoid membranes, which occurs along with elevated electron flow caused by excess light, and to induce a large, fast, and reversible pH-dependent quenching in LHCII-containing membranes. Mediates excitation energy transfer from light-harvesting complex II (LHCII) to photosystem I (PSI), rather than photosystem II (PSII), at low pH, which mimics the acidified lumen of the thylakoid membranes in high light-exposed chloroplasts. Activates PSI-dependent fluorescence quenching in addition to dissipating excitation energy in LHCII to avoid photooxidative stress under excess light. The polypeptide is Light-harvesting complex stress-related protein 1, chloroplastic (Chlamydomonas reinhardtii (Chlamydomonas smithii)).